The chain runs to 596 residues: Arginine--tRNA ligase (596 aa).

The 'HIGH' region signature appears at 139–149 (ANPTGPLHVGH).

This sequence belongs to the class-I aminoacyl-tRNA synthetase family. As to quaternary structure, monomer.

The protein localises to the cytoplasm. The catalysed reaction is tRNA(Arg) + L-arginine + ATP = L-arginyl-tRNA(Arg) + AMP + diphosphate. The polypeptide is Arginine--tRNA ligase (Paraburkholderia phytofirmans (strain DSM 17436 / LMG 22146 / PsJN) (Burkholderia phytofirmans)).